We begin with the raw amino-acid sequence, 485 residues long: Ras-like GTPase YcjX (485 aa).

The Walker A motif motif lies at 33–40; sequence GLSGAGKT. 13 residues coordinate GTP: Ser-35, Gly-36, Gly-38, Lys-39, Thr-40, Ala-41, Trp-110, Ser-113, Thr-114, Arg-115, Lys-355, Asp-357, and His-358. GDP contacts are provided by Gly-36, Gly-38, Lys-39, Thr-40, Ala-41, Trp-110, Ser-113, and Thr-114. GDP contacts are provided by Lys-355, Asp-357, His-358, Ser-395, Ala-396, and Ile-397. Residue Ile-397 participates in GTP binding.

In terms of assembly, monomer in solution. Requires Mg(2+) as cofactor.

The enzyme catalyses GTP + H2O = GDP + phosphate + H(+). Alternates between an inactive form bound to GDP and an active form bound to GTP. Likely activated by a guanine nucleotide-exchange factor (GEF). Its function is as follows. Binds GTP and GDP. Has intrinsic GTPase activity. Does not hydrolyze ATP. May act as a transducer of stress responses. This Shewanella oneidensis (strain ATCC 700550 / JCM 31522 / CIP 106686 / LMG 19005 / NCIMB 14063 / MR-1) protein is Ras-like GTPase YcjX.